Reading from the N-terminus, the 440-residue chain is Thymidine phosphorylase (440 aa).

It belongs to the thymidine/pyrimidine-nucleoside phosphorylase family. Homodimer.

The enzyme catalyses thymidine + phosphate = 2-deoxy-alpha-D-ribose 1-phosphate + thymine. Its pathway is pyrimidine metabolism; dTMP biosynthesis via salvage pathway; dTMP from thymine: step 1/2. The enzymes which catalyze the reversible phosphorolysis of pyrimidine nucleosides are involved in the degradation of these compounds and in their utilization as carbon and energy sources, or in the rescue of pyrimidine bases for nucleotide synthesis. In Shigella flexneri serotype 5b (strain 8401), this protein is Thymidine phosphorylase.